The following is a 234-amino-acid chain: Nuclear transcription factor Y subunit C-1 (234 aa).

Disordered regions lie at residues 1 to 20 (MDTN…PPPP) and 205 to 234 (SVWQ…DGQG). A compositionally biased stretch (pro residues) spans 7 to 20 (QPPPSAAGIPPPPP). The span at 209–219 (TSTGTGDDVSY) shows a compositional bias: low complexity. The span at 220–234 (GSGGSSGQGNLDGQG) shows a compositional bias: gly residues.

It belongs to the NFYC/HAP5 subunit family. In terms of assembly, heterotrimeric transcription factor composed of three components, NF-YA, NF-YB and NF-YC. NF-YB and NF-YC must interact and dimerize for NF-YA association and DNA binding. As to expression, ubiquitous. Present in etiolated seedlings.

The protein localises to the nucleus. Its function is as follows. Stimulates the transcription of various genes by recognizing and binding to a CCAAT motif in promoters. The sequence is that of Nuclear transcription factor Y subunit C-1 (NFYC1) from Arabidopsis thaliana (Mouse-ear cress).